Reading from the N-terminus, the 359-residue chain is NADH-quinone oxidoreductase subunit H (359 aa).

8 helical membrane passes run 19-39, 94-114, 127-147, 166-186, 202-222, 266-286, 301-321, and 337-357; these read IGWF…FIAL, FLFV…FAVL, VGLF…LAAG, IVSY…LAGT, FMHW…IYFI, MFMV…SPLP, VWGA…QMWL, and CWKV…IWVI.

It belongs to the complex I subunit 1 family. NDH-1 is composed of 14 different subunits. Subunits NuoA, H, J, K, L, M, N constitute the membrane sector of the complex.

It is found in the cell inner membrane. The catalysed reaction is a quinone + NADH + 5 H(+)(in) = a quinol + NAD(+) + 4 H(+)(out). NDH-1 shuttles electrons from NADH, via FMN and iron-sulfur (Fe-S) centers, to quinones in the respiratory chain. The immediate electron acceptor for the enzyme in this species is believed to be ubiquinone. Couples the redox reaction to proton translocation (for every two electrons transferred, four hydrogen ions are translocated across the cytoplasmic membrane), and thus conserves the redox energy in a proton gradient. This subunit may bind ubiquinone. The polypeptide is NADH-quinone oxidoreductase subunit H (Chlorobaculum parvum (strain DSM 263 / NCIMB 8327) (Chlorobium vibrioforme subsp. thiosulfatophilum)).